The sequence spans 338 residues: Phenylalanine--tRNA ligase alpha subunit (338 aa).

Residue glutamate 252 coordinates Mg(2+).

This sequence belongs to the class-II aminoacyl-tRNA synthetase family. Phe-tRNA synthetase alpha subunit type 1 subfamily. In terms of assembly, tetramer of two alpha and two beta subunits. Requires Mg(2+) as cofactor.

It localises to the cytoplasm. The catalysed reaction is tRNA(Phe) + L-phenylalanine + ATP = L-phenylalanyl-tRNA(Phe) + AMP + diphosphate + H(+). This is Phenylalanine--tRNA ligase alpha subunit from Pseudomonas fluorescens (strain Pf0-1).